The chain runs to 446 residues: N-succinylarginine dihydrolase (446 aa).

Residues 19-28 (AGLSFGNEAS), N110, and 137-138 (HR) each bind substrate. Residue E174 is part of the active site. R213 contacts substrate. H249 is an active-site residue. Residues D251 and N364 each coordinate substrate. C370 serves as the catalytic Nucleophile.

Belongs to the succinylarginine dihydrolase family. Homodimer.

The enzyme catalyses N(2)-succinyl-L-arginine + 2 H2O + 2 H(+) = N(2)-succinyl-L-ornithine + 2 NH4(+) + CO2. It participates in amino-acid degradation; L-arginine degradation via AST pathway; L-glutamate and succinate from L-arginine: step 2/5. Catalyzes the hydrolysis of N(2)-succinylarginine into N(2)-succinylornithine, ammonia and CO(2). The protein is N-succinylarginine dihydrolase of Acinetobacter baylyi (strain ATCC 33305 / BD413 / ADP1).